We begin with the raw amino-acid sequence, 782 residues long: MSLPANTPFSLEEITAEGLKPEEYAEIVQRLGRHPNLAELGMFGVMWSEHCCYKNSRPLLKQFPTQGQRVLVGPGENAGVVDLGEGLRLAFKIESHNHPSAVEPFQGAATGVGGILRDIFTMGARPIALLNSLRFGSLDDPRTRRLFSGVVSGISHYGNCVGVPTVGGEVYFDPAYTGNPLVNVMALGLMETPEIVKSGASGIGNPVLYVGSTTGRDGMGGASFASAELSEASLDDRPAVQVGDPFLEKSLIEACLEAFKTGAVVAAQDMGAAGITCSTSEMAAKGGVGIDLDLDLIPVREKGMVPYEYLLSESQERMLFVAYKGREQELIDIFHRWGLHAVVAGRVIEEPIVRIRFQGGIAAEIPAAALAENTPLYHRQSLTEPPDFLKTAWAWTPAALPPCSTTGLQLESGEKTWNQVLLDLLASPTIASKRWVYRQYDHQVQNNTVLLPGAADAAVVRLRPQLADQACQGVNSGVAATLDCNARYVYLHPYAGAKAAVAEAARNLSCVGAEPLAVTDNLNFASPENPVGYWQLAEACRGLAEACRELNTPVTGGNVSLYNETLDPEGKPQPIYPTPVVGMVGLIPDLNRICGQGWQSTGDLIYLLGVPLSDAGHATVTLGGSEYLATIHQTIAGQPPQVDLALEKQVQAVCRHGIRQGWIHSAHDCAEGGIAIALAEACISGQRGAEIELDCSDISRLDQLLFAEGGARILVSVPLDQQTLWESYLEEQLQGHWQRLGQVTEINSCLWVRSSDNLSLIQVTIEEISTAWGKAIENKLSA.

Histidine 50 is a catalytic residue. Positions 53 and 92 each coordinate ATP. Glutamate 94 lines the Mg(2+) pocket. Residues 95–98 (SHNH) and arginine 117 each bind substrate. Histidine 96 functions as the Proton acceptor in the catalytic mechanism. Mg(2+) is bound at residue aspartate 118. Substrate is bound at residue glutamine 241. A Mg(2+)-binding site is contributed by aspartate 269. 313 to 315 (ESQ) is a binding site for substrate. Aspartate 520 and glycine 557 together coordinate ATP. Mg(2+) is bound at residue asparagine 558. Position 560 (serine 560) interacts with substrate.

It belongs to the FGAMS family. In terms of assembly, monomer. Part of the FGAM synthase complex composed of 1 PurL, 1 PurQ and 2 PurS subunits.

It localises to the cytoplasm. It carries out the reaction N(2)-formyl-N(1)-(5-phospho-beta-D-ribosyl)glycinamide + L-glutamine + ATP + H2O = 2-formamido-N(1)-(5-O-phospho-beta-D-ribosyl)acetamidine + L-glutamate + ADP + phosphate + H(+). The protein operates within purine metabolism; IMP biosynthesis via de novo pathway; 5-amino-1-(5-phospho-D-ribosyl)imidazole from N(2)-formyl-N(1)-(5-phospho-D-ribosyl)glycinamide: step 1/2. Its function is as follows. Part of the phosphoribosylformylglycinamidine synthase complex involved in the purines biosynthetic pathway. Catalyzes the ATP-dependent conversion of formylglycinamide ribonucleotide (FGAR) and glutamine to yield formylglycinamidine ribonucleotide (FGAM) and glutamate. The FGAM synthase complex is composed of three subunits. PurQ produces an ammonia molecule by converting glutamine to glutamate. PurL transfers the ammonia molecule to FGAR to form FGAM in an ATP-dependent manner. PurS interacts with PurQ and PurL and is thought to assist in the transfer of the ammonia molecule from PurQ to PurL. In Cyanothece sp. (strain PCC 7425 / ATCC 29141), this protein is Phosphoribosylformylglycinamidine synthase subunit PurL.